The chain runs to 386 residues: Circumsporozoite protein (386 aa).

The signal sequence occupies residues M1–C22. The tract at residues H51–K304 is disordered. A compositionally biased stretch (basic and acidic residues) spans D72–D100. The required for the binding to heparan sulfate proteoglycans (HSPGs) on the surface of host hepatocytes stretch occupies residues K80–R88. Residues K91 to P95 form a region I; contains the proteolytic cleavage site region. 20 consecutive repeat copies span residues G96–A104, G105–A113, G114–A122, G123–A131, G132–A140, G141–A149, G150–A158, G159–A167, G168–A176, G177–A185, G186–A194, G195–A203, G204–A212, G213–A221, G222–A230, G231–A239, G240–A248, G249–A257, G258–A266, and G267–A275. Positions G96–A275 are 20 X 9 AA tandem repeats of G-D-R-A-[AD]-G-Q-P-A. Residues A275–G292 show a composition bias toward gly residues. Residues Q293–E303 show a composition bias toward low complexity. Residues K312–A364 form the TSP type-1 domain. Cystine bridges form between C324–C358 and C328–C363. O-linked (Fuc) threonine glycosylation is present at T327. C363 carries the GPI-anchor amidated cysteine lipid modification. Residues A364–N386 constitute a propeptide, removed in mature form.

The protein belongs to the plasmodium circumsporozoite protein family. During host cell invasion, proteolytically cleaved at the cell membrane in the region I by a papain-like cysteine protease of parasite origin. Cleavage is triggered by the sporozoite contact with highly sulfated heparan sulfate proteoglycans (HSPGs) present on the host hepatocyte cell surface. Cleavage exposes the TSP type-1 (TSR) domain and is required for productive invasion of host hepatocytes but not for adhesion to the host cell membrane. Cleavage is dispensable for sporozoite development in the oocyst, motility and for traversal of host and vector cells. In terms of processing, O-glycosylated; maybe by POFUT2.

It localises to the cell membrane. The protein resides in the cytoplasm. Its function is as follows. Essential sporozoite protein. In the mosquito vector, required for sporozoite development in the oocyst, migration through the vector hemolymph and entry into the vector salivary glands. In the vertebrate host, required for sporozoite migration through the host dermis and infection of host hepatocytes. Binds to highly sulfated heparan sulfate proteoglycans (HSPGs) on the surface of host hepatocytes. Functionally, in the vertebrate host, binds to highly sulfated heparan sulfate proteoglycans (HSPGs) on the surface of host hepatocytes and is required for sporozoite invasion of the host hepatocytes. The polypeptide is Circumsporozoite protein (Plasmodium simium).